We begin with the raw amino-acid sequence, 296 residues long: D-alanine--D-alanine ligase (296 aa).

The ATP-grasp domain occupies 103-293 (KEILMHHRMP…FDSFVKRIIE (191 aa)). 129-180 (ISFPVAVKPSSGGSSIATFKVKSIQELKHAYEEASKYGEVMIEQWVTGKEIT) contributes to the ATP binding site. Residues Asp-247, Glu-260, and Asn-262 each contribute to the Mg(2+) site.

Belongs to the D-alanine--D-alanine ligase family. The cofactor is Mg(2+). Mn(2+) is required as a cofactor.

The protein localises to the cytoplasm. It catalyses the reaction 2 D-alanine + ATP = D-alanyl-D-alanine + ADP + phosphate + H(+). Its pathway is cell wall biogenesis; peptidoglycan biosynthesis. Its function is as follows. Cell wall formation. The polypeptide is D-alanine--D-alanine ligase (Francisella tularensis subsp. tularensis (strain FSC 198)).